The primary structure comprises 392 residues: Alanine--glyoxylate aminotransferase (392 aa).

Lysine 209 carries the post-translational modification N6-(pyridoxal phosphate)lysine. At lysine 225 the chain carries N6-acetyllysine; alternate. The residue at position 225 (lysine 225) is an N6-succinyllysine; alternate. An N6-acetyllysine mark is found at lysine 234 and lysine 312. Arginine 360 is a binding site for substrate. The Microbody targeting signal motif lies at 390 to 392 (KKL).

It belongs to the class-V pyridoxal-phosphate-dependent aminotransferase family. Homodimer. It depends on pyridoxal 5'-phosphate as a cofactor.

It is found in the peroxisome. It carries out the reaction L-serine + pyruvate = 3-hydroxypyruvate + L-alanine. It catalyses the reaction glyoxylate + L-alanine = glycine + pyruvate. Functionally, peroxisomal aminotransferase that catalyzes the transamination of glyoxylate to glycine and contributes to the glyoxylate detoxification. Also catalyzes the transamination between L-serine and pyruvate and contributes to gluconeogenesis from the L-serine metabolism. The protein is Alanine--glyoxylate aminotransferase of Pongo abelii (Sumatran orangutan).